The chain runs to 565 residues: MAFNFNWSPLMADAGFYTRAQDLLTAALNKSPKPPIIVDDIKVTELNLGSIPPDLEILEVGDLAEDRFRGIFKMSYNGDAFLTLKTRVQANPLNTFLVTRPSFASPKPLAAASGLTIPLQITLSEFRLSGFVVLVFSKQKGITVVFRNDPLESLKVSSTFDSISFVRDYLQKAIEGQLRALFMDELPAIIHRLSLRLWVPEYRDRESESVNTLDLSSESGPGQDPLASPPQDPVDASGNALNPSEVASLSLDSGVEIHNLFSHKNLLRLAALTDSQRTLSLFTPSIKDVVYRAWTASAELGESNTLTSPTSPVLSRTHSHIGSLHSFVDNASTISMQSGGSSNFSGFGSYLRPGRHSRSHTKKRKKRVVDLRRPKTTDDVDSVSGDSVFSSENATSAPTIFSSPAHFSEEKNDDPVTPPLGPQNDLHLPTIHERRRISQGDQTLRRSNLSMSEAAQPSSSRSAQMIAETWPDPDATPRNTIRLPSNDRASNRFTAVSLPSSAIQYTPTVPINNNNPREQVWLSKMAAELARRMQEQKIDPSGSRPFPDFWDDHSREEIPPPAYGH.

Residues M1–E208 enclose the SMP-LTD domain. A compositionally biased stretch (polar residues) spans S209 to G220. 3 disordered regions span residues S209–L241, F347–A463, and M533–H565. A compositionally biased stretch (basic residues) spans P353–R367. Residues V368–D378 show a composition bias toward basic and acidic residues. Residues S382–S391 are compositionally biased toward low complexity. Polar residues-rich tracts occupy residues E392–S402 and Q439–A463.

This sequence belongs to the MDM34 family. Component of the ER-mitochondria encounter structure (ERMES) or MDM complex, composed of mmm1, mdm10, mdm12 and mdm34.

The protein localises to the mitochondrion outer membrane. In terms of biological role, component of the ERMES/MDM complex, which serves as a molecular tether to connect the endoplasmic reticulum (ER) and mitochondria. Components of this complex are involved in the control of mitochondrial shape and protein biogenesis, and function in nonvesicular lipid trafficking between the ER and mitochondria. Mdm34 is required for the interaction of the ER-resident membrane protein mmm1 and the outer mitochondrial membrane-resident beta-barrel protein mdm10. The sequence is that of Mitochondrial distribution and morphology protein 34 from Talaromyces marneffei (strain ATCC 18224 / CBS 334.59 / QM 7333) (Penicillium marneffei).